Reading from the N-terminus, the 595-residue chain is Inactive glycosyltransferase 25 family member 3 (595 aa).

The N-terminal stretch at 1–22 (MRAARAAPLLQLLLLLGPWLEA) is a signal peptide. N-linked (GlcNAc...) asparagine glycans are attached at residues N75, N153, N237, and N360. The tract at residues 548 to 595 (DTETSSPWDDDSGRLISWSGSQKTLRSPRLDLTGSSGHSLQPQPRDEL) is disordered. A compositionally biased stretch (polar residues) spans 580–589 (TGSSGHSLQP). Residues 592 to 595 (RDEL) carry the Prevents secretion from ER motif.

It belongs to the glycosyltransferase 25 family. As to expression, ubiquitous. Highly expressed in secretory and nervous tissues.

Its subcellular location is the endoplasmic reticulum lumen. Functionally, probable cell adhesion protein involved in leukocyte transmigration across the blood-brain barrier. Does not express any beta-galactosyltransferase activity in vitro. In Homo sapiens (Human), this protein is Inactive glycosyltransferase 25 family member 3 (CERCAM).